Reading from the N-terminus, the 295-residue chain is Shikimate dehydrogenase (NADP(+)) (295 aa).

Residues 20-22 and Thr-68 contribute to the shikimate site; that span reads SWS. Lys-72 serves as the catalytic Proton acceptor. Asn-93 and Asp-108 together coordinate shikimate. NADP(+)-binding positions include 132–136 and Met-234; that span reads GNGGA. Tyr-236 serves as a coordination point for shikimate. Gly-257 is a binding site for NADP(+).

Belongs to the shikimate dehydrogenase family. Homodimer.

The catalysed reaction is shikimate + NADP(+) = 3-dehydroshikimate + NADPH + H(+). It functions in the pathway metabolic intermediate biosynthesis; chorismate biosynthesis; chorismate from D-erythrose 4-phosphate and phosphoenolpyruvate: step 4/7. In terms of biological role, involved in the biosynthesis of the chorismate, which leads to the biosynthesis of aromatic amino acids. Catalyzes the reversible NADPH linked reduction of 3-dehydroshikimate (DHSA) to yield shikimate (SA). This chain is Shikimate dehydrogenase (NADP(+)), found in Chlorobaculum tepidum (strain ATCC 49652 / DSM 12025 / NBRC 103806 / TLS) (Chlorobium tepidum).